Reading from the N-terminus, the 302-residue chain is MTFDQRLLLVHAHPDDESIGQGATMAKYAAEGRGVTLVTCTGGEMGEILVPELTHLAADQEDRLGEHRRGELDAAMAELGVTDHRYLGGFGTYRDSGMKWHEDGHAVPADDIHQNAFWHADLTEAADHLVAVIREVRPQVLVTYDQFGGYGHPDHIQAHRVATYAAALAAVPSYRKDLGAAWDIAKIYWGAMSESRMRAALRALREAGDTTAFEGMDPDGPLPPFVTADEDLSAVVDAQEHVEAKLAAMRAHATQITTDGPFFALSNNVGNVAWGLEFFRLAKGERGELNQDGLETDLFAGL.

Zn(2+)-binding residues include H13, D16, and H155.

Belongs to the MshB deacetylase family. Zn(2+) is required as a cofactor.

It carries out the reaction 1D-myo-inositol 2-acetamido-2-deoxy-alpha-D-glucopyranoside + H2O = 1D-myo-inositol 2-amino-2-deoxy-alpha-D-glucopyranoside + acetate. In terms of biological role, catalyzes the deacetylation of 1D-myo-inositol 2-acetamido-2-deoxy-alpha-D-glucopyranoside (GlcNAc-Ins) in the mycothiol biosynthesis pathway. The sequence is that of 1D-myo-inositol 2-acetamido-2-deoxy-alpha-D-glucopyranoside deacetylase from Nocardioides sp. (strain ATCC BAA-499 / JS614).